The chain runs to 71 residues: Large ribosomal subunit protein uL29 (71 aa).

It belongs to the universal ribosomal protein uL29 family.

This chain is Large ribosomal subunit protein uL29, found in Rickettsia africae (strain ESF-5).